Here is a 492-residue protein sequence, read N- to C-terminus: NADH-quinone oxidoreductase subunit N (492 aa).

14 helical membrane passes run 12 to 32, 44 to 64, 76 to 96, 115 to 135, 138 to 158, 169 to 189, 212 to 232, 244 to 264, 272 to 292, 306 to 326, 334 to 354, 381 to 401, 416 to 438, and 463 to 483; these read LLPY…MIAI, ISVV…AGII, LFVI…CALA, LYLL…AQHL, FFMS…YTYM, YLVL…FIYA, LILG…AAPF, PAPI…ALAV, LLAL…SILL, LLGY…VSIG, SMYM…VTLM, TAVM…AGFI, WFLA…RVLL, and IMVI…NSMI.

It belongs to the complex I subunit 2 family. In terms of assembly, NDH-1 is composed of 14 different subunits. Subunits NuoA, H, J, K, L, M, N constitute the membrane sector of the complex.

It localises to the cell inner membrane. The catalysed reaction is a quinone + NADH + 5 H(+)(in) = a quinol + NAD(+) + 4 H(+)(out). Its function is as follows. NDH-1 shuttles electrons from NADH, via FMN and iron-sulfur (Fe-S) centers, to quinones in the respiratory chain. The immediate electron acceptor for the enzyme in this species is believed to be ubiquinone. Couples the redox reaction to proton translocation (for every two electrons transferred, four hydrogen ions are translocated across the cytoplasmic membrane), and thus conserves the redox energy in a proton gradient. This is NADH-quinone oxidoreductase subunit N from Psychrobacter arcticus (strain DSM 17307 / VKM B-2377 / 273-4).